The following is a 124-amino-acid chain: Ribonuclease pancreatic (124 aa).

Substrate contacts are provided by Lys7 and Arg10. His12 functions as the Proton acceptor in the catalytic mechanism. Intrachain disulfides connect Cys26–Cys84, Cys40–Cys95, Cys58–Cys110, and Cys65–Cys72. Residue Asn34 is glycosylated (N-linked (GlcNAc...) asparagine). Substrate is bound by residues 41-45 (KPVNT), Lys66, and Arg85. His119 (proton donor) is an active-site residue.

The protein belongs to the pancreatic ribonuclease family. As to quaternary structure, monomer. Interacts with and forms tight 1:1 complexes with RNH1. Dimerization of two such complexes may occur. Interaction with RNH1 inhibits this protein. In terms of tissue distribution, pancreas.

Its subcellular location is the secreted. The enzyme catalyses an [RNA] containing cytidine + H2O = an [RNA]-3'-cytidine-3'-phosphate + a 5'-hydroxy-ribonucleotide-3'-[RNA].. The catalysed reaction is an [RNA] containing uridine + H2O = an [RNA]-3'-uridine-3'-phosphate + a 5'-hydroxy-ribonucleotide-3'-[RNA].. Endonuclease that catalyzes the cleavage of RNA on the 3' side of pyrimidine nucleotides. Acts on single-stranded and double-stranded RNA. This Mesocricetus auratus (Golden hamster) protein is Ribonuclease pancreatic (RNASE1).